Consider the following 453-residue polypeptide: Elongation factor 1-alpha (453 aa).

One can recognise a tr-type G domain in the interval 5-230; that stretch reads KTHINIVVIG…DAIVEPKRPH (226 aa). Positions 14–21 are G1; it reads GHVDAGKS. 14–21 serves as a coordination point for GTP; sequence GHVDAGKS. The segment at 70 to 74 is G2; that stretch reads GITID. The interval 91–94 is G3; it reads DAPG. Residues 91-95 and 153-156 contribute to the GTP site; these read DAPGH and NKMD. Residues 153-156 form a G4 region; the sequence is NKMD. Residues 194–196 are G5; it reads SGW.

The protein belongs to the TRAFAC class translation factor GTPase superfamily. Classic translation factor GTPase family. EF-Tu/EF-1A subfamily. In terms of assembly, binds to actin.

Its subcellular location is the cytoplasm. This protein promotes the GTP-dependent binding of aminoacyl-tRNA to the A-site of ribosomes during protein biosynthesis. It is also an abundant actin filament bundling protein. This Dictyostelium discoideum (Social amoeba) protein is Elongation factor 1-alpha (eef1a2).